The chain runs to 304 residues: UDP-3-O-acyl-N-acetylglucosamine deacetylase (304 aa).

His-78, His-235, and Asp-239 together coordinate Zn(2+). The Proton donor role is filled by His-262.

The protein belongs to the LpxC family. Requires Zn(2+) as cofactor.

The catalysed reaction is a UDP-3-O-[(3R)-3-hydroxyacyl]-N-acetyl-alpha-D-glucosamine + H2O = a UDP-3-O-[(3R)-3-hydroxyacyl]-alpha-D-glucosamine + acetate. Its pathway is glycolipid biosynthesis; lipid IV(A) biosynthesis; lipid IV(A) from (3R)-3-hydroxytetradecanoyl-[acyl-carrier-protein] and UDP-N-acetyl-alpha-D-glucosamine: step 2/6. In terms of biological role, catalyzes the hydrolysis of UDP-3-O-myristoyl-N-acetylglucosamine to form UDP-3-O-myristoylglucosamine and acetate, the committed step in lipid A biosynthesis. The chain is UDP-3-O-acyl-N-acetylglucosamine deacetylase from Anaeromyxobacter sp. (strain Fw109-5).